Here is a 290-residue protein sequence, read N- to C-terminus: Pyridoxal kinase PdxY (290 aa).

Substrate contacts are provided by residues Ser-12 and 47–48 (TQ). ATP is bound by residues Asp-114, Glu-151, Lys-184, and 211 to 214 (RPLL). Residue Asp-225 participates in substrate binding.

Belongs to the pyridoxine kinase family. PdxY subfamily. In terms of assembly, homodimer. The cofactor is Mg(2+).

It catalyses the reaction pyridoxal + ATP = pyridoxal 5'-phosphate + ADP + H(+). Its pathway is cofactor metabolism; pyridoxal 5'-phosphate salvage; pyridoxal 5'-phosphate from pyridoxal: step 1/1. Functionally, pyridoxal kinase involved in the salvage pathway of pyridoxal 5'-phosphate (PLP). Catalyzes the phosphorylation of pyridoxal to PLP. The sequence is that of Pyridoxal kinase PdxY from Pseudomonas putida (strain W619).